Here is a 445-residue protein sequence, read N- to C-terminus: MAVQIENLGSLDRKMTLEFARADLAKAREARLAKVGKSMKMAGFRPGKVPKNLVEKQHGMQVDFELQFDKAAELFYELAQKEGVALAGQPRLEPKSEIDAEKVVFDAFFEVLPEVKIGDFSKAEVTKYTTDIGEAEIDRALDALRKQQVHYHPRGEAGPHGDGGSNTAAQNGDQVVINFVGKIDGVEFAGGKAENFECVLGEGRMLPEFEAATLGLKVGESKSFPLSFPADYHGKDVAGKTAEFTITVKSVNWAHLPVVDDAFALSLGVTEGGVTKMRAEVKENLDREVKRRVTTLLKSEVMDKLNSLCELDVPKSLVASEQERLVEGARQDLMQRGVPNAKDAPIPAEIFAEQATKRVRLGLILSELVKNQNLIATADQIKAEIDEQATTYEDPKEVIRWFYRNPGRLKDIENLVLEDNVIKYFTSQAKVNDKSVTFEELSKLN.

A PPIase FKBP-type domain is found at 172 to 257 (GDQVVINFVG…VKSVNWAHLP (86 aa)).

Belongs to the FKBP-type PPIase family. Tig subfamily.

Its subcellular location is the cytoplasm. It catalyses the reaction [protein]-peptidylproline (omega=180) = [protein]-peptidylproline (omega=0). Involved in protein export. Acts as a chaperone by maintaining the newly synthesized protein in an open conformation. Functions as a peptidyl-prolyl cis-trans isomerase. This Polynucleobacter necessarius subsp. necessarius (strain STIR1) protein is Trigger factor.